A 373-amino-acid chain; its full sequence is Chaperone protein DnaJ (373 aa).

The J domain maps to 5–71; sequence DYYEILGVSR…EKRAMYDKFG (67 aa). The CR-type zinc-finger motif lies at 144–226; it reads GVKIPLEYDR…CGGTGRIRKR (83 aa). Cys157, Cys160, Cys174, Cys177, Cys200, Cys203, Cys214, and Cys217 together coordinate Zn(2+). CXXCXGXG motif repeat units lie at residues 157 to 164, 174 to 181, 200 to 207, and 214 to 221; these read CEHCHGEG, CPKCHGTG, CNQCGGTG, and CRVCGGTG.

This sequence belongs to the DnaJ family. Homodimer. Zn(2+) serves as cofactor.

It localises to the cytoplasm. Its function is as follows. Participates actively in the response to hyperosmotic and heat shock by preventing the aggregation of stress-denatured proteins and by disaggregating proteins, also in an autonomous, DnaK-independent fashion. Unfolded proteins bind initially to DnaJ; upon interaction with the DnaJ-bound protein, DnaK hydrolyzes its bound ATP, resulting in the formation of a stable complex. GrpE releases ADP from DnaK; ATP binding to DnaK triggers the release of the substrate protein, thus completing the reaction cycle. Several rounds of ATP-dependent interactions between DnaJ, DnaK and GrpE are required for fully efficient folding. Also involved, together with DnaK and GrpE, in the DNA replication of plasmids through activation of initiation proteins. The polypeptide is Chaperone protein DnaJ (Thermosipho melanesiensis (strain DSM 12029 / CIP 104789 / BI429)).